We begin with the raw amino-acid sequence, 478 residues long: ATP synthase subunit beta (478 aa).

Residue 164–171 coordinates ATP; it reads GGAGVGKT.

It belongs to the ATPase alpha/beta chains family. In terms of assembly, F-type ATPases have 2 components, CF(1) - the catalytic core - and CF(0) - the membrane proton channel. CF(1) has five subunits: alpha(3), beta(3), gamma(1), delta(1), epsilon(1). CF(0) has three main subunits: a(1), b(2) and c(9-12). The alpha and beta chains form an alternating ring which encloses part of the gamma chain. CF(1) is attached to CF(0) by a central stalk formed by the gamma and epsilon chains, while a peripheral stalk is formed by the delta and b chains.

The protein resides in the cell membrane. The enzyme catalyses ATP + H2O + 4 H(+)(in) = ADP + phosphate + 5 H(+)(out). Functionally, produces ATP from ADP in the presence of a proton gradient across the membrane. The catalytic sites are hosted primarily by the beta subunits. The protein is ATP synthase subunit beta of Corynebacterium kroppenstedtii (strain DSM 44385 / JCM 11950 / CIP 105744 / CCUG 35717).